The following is a 588-amino-acid chain: Retrograde regulation protein 2 (588 aa).

Belongs to the GppA/Ppx family.

Functionally, required for a novel path of interorganelle communication between mitochondria, peroxisomes and the nucleus, thereby maintaining a functional metabolic interaction between the tricarboxylic acid and glyoxylate cycles. In particular, required for the retrograde expression of the peroxisomal isoform of citrate synthase, CIT2. The chain is Retrograde regulation protein 2 (RTG2) from Saccharomyces cerevisiae (strain ATCC 204508 / S288c) (Baker's yeast).